Consider the following 717-residue polypeptide: Adhesion cell surface protein MAD1 (717 aa).

A signal peptide spans 1–19; sequence MKSALSVVVAAAGVQQASA. 2 stretches are compositionally biased toward low complexity: residues 237–254 and 262–274; these read TPVT…QTTT and SKET…QTTP. Disordered stretches follow at residues 237–392 and 451–506; these read TPVT…ATTT and RTQS…TPPC. A run of 8 repeats spans residues 275 to 286, 287 to 298, 299 to 310, 311 to 328, 329 to 340, 341 to 352, 353 to 364, and 365 to 376. The span at 275 to 366 shows a compositional bias: polar residues; that stretch reads GKETTPAQQT…TPAQQTTPGK (92 aa). 2 stretches are compositionally biased toward low complexity: residues 368–392 and 484–503; these read TTPA…ATTT and QPTG…STQT. Residues 481 to 595 form the CFEM domain; that stretch reads TPEQPTGEKP…TQIITVTGTP (115 aa). 3 disulfides stabilise this stretch: C513–C546, C524–C532, and C534–C568. A heme-binding site is contributed by D529. The N-linked (GlcNAc...) asparagine glycan is linked to N614. The tract at residues 632–690 is disordered; it reads PTPTGGVPNQPPATASVPAGQNPPPVTGQNPPPAVTDQSPPPAITTGTGGVIPPKPTGS. The span at 652–674 shows a compositional bias: pro residues; it reads QNPPPVTGQNPPPAVTDQSPPPA. A695 carries GPI-anchor amidated alanine lipidation. A propeptide spans 696–717 (removed in mature form); that stretch reads GSGRVGAGLGMVLAVAAFVAAL.

Belongs to the RBT5 family. Post-translationally, the GPI-anchor is attached to the protein in the endoplasmic reticulum and serves to target the protein to the cell surface. There, the glucosamine-inositol phospholipid moiety is cleaved off and the GPI-modified mannoprotein is covalently attached via its lipidless GPI glycan remnant to the 1,6-beta-glucan of the outer cell wall layer.

The protein resides in the secreted. It is found in the cell wall. The protein localises to the cell membrane. Functionally, cell surface adhesion protein that plays a key role in virulence by allowing adherence to the insect host surface. Required to orientate the cytoskeleton and stimulate the expression of genes involved in the cell cycle. Is also involved in achieving the septin hourglass shape and subsequent separation of cells. The chain is Adhesion cell surface protein MAD1 from Metarhizium anisopliae (Entomophthora anisopliae).